Consider the following 575-residue polypeptide: Thiol:disulfide interchange protein DsbD (575 aa).

The signal sequence occupies residues 1 to 24; the sequence is MIKRTLMLFLLLCSPLLTPAAANA. 2 disulfide bridges follow: Cys126–Cys132 and Cys192–Cys314. Transmembrane regions (helical) follow at residues 180-200, 216-236, 253-273, 297-317, 336-356, 367-387, 394-414, and 425-445; these read AILI…YPLI, IFWL…LLGL, YVLI…FGLY, LFGV…CTTA, GLTL…VTLF, WMQY…VFLL, AWGI…GFVL, and VIQL…QDWF. Positions 444 to 575 constitute a Thioredoxin domain; the sequence is WFWGTTVTQQ…FNEHLQHLPK (132 aa). The cysteines at positions 490 and 493 are disulfide-linked.

It belongs to the thioredoxin family. DsbD subfamily.

The protein localises to the cell inner membrane. It carries out the reaction [protein]-dithiol + NAD(+) = [protein]-disulfide + NADH + H(+). The enzyme catalyses [protein]-dithiol + NADP(+) = [protein]-disulfide + NADPH + H(+). In terms of biological role, required to facilitate the formation of correct disulfide bonds in some periplasmic proteins and for the assembly of the periplasmic c-type cytochromes. Acts by transferring electrons from cytoplasmic thioredoxin to the periplasm. This transfer involves a cascade of disulfide bond formation and reduction steps. This is Thiol:disulfide interchange protein DsbD from Photorhabdus laumondii subsp. laumondii (strain DSM 15139 / CIP 105565 / TT01) (Photorhabdus luminescens subsp. laumondii).